A 174-amino-acid polypeptide reads, in one-letter code: Thiol-disulfide oxidoreductase ResA (174 aa).

A helical; Signal-anchor for type II membrane protein transmembrane segment spans residues 11-30 (TAILLVLLAAIGYTIYTNFF). One can recognise a Thioredoxin domain in the interval 36–174 (VAVGSTAPDF…IERHLESIKP (139 aa)). Cysteines 74 and 77 form a disulfide.

It belongs to the thioredoxin family. ResA subfamily.

The protein resides in the cell membrane. Its pathway is protein modification; cytochrome c assembly. Thiol-disulfide oxidoreductase which is required in disulfide reduction during c-type cytochrome synthesis. May accept reducing equivalents from CcdA, leading to breakage of disulfide bonds in apocytochrome c; following this reduction heme can be covalently attached. The protein is Thiol-disulfide oxidoreductase ResA of Geobacillus kaustophilus (strain HTA426).